We begin with the raw amino-acid sequence, 87 residues long: Small ribosomal subunit protein bS18B (87 aa).

The protein belongs to the bacterial ribosomal protein bS18 family. Part of the 30S ribosomal subunit. Forms a tight heterodimer with protein bS6.

Binds as a heterodimer with protein bS6 to the central domain of the 16S rRNA, where it helps stabilize the platform of the 30S subunit. This is Small ribosomal subunit protein bS18B from Mycobacterium marinum (strain ATCC BAA-535 / M).